The sequence spans 233 residues: MNMIGTFIKPMHPEGRKFVAIFAAVTFGLFLLTPILGWIGVGLTVWCYYFFRDPERVTPARPGLVISPADGVVSLIEPAVPPAELGLPDVPLTRVSVFMSVFNCHVNRAPVAGEVTAVAYRPGKFFNASLDKASADNERNSLAIRMEDGRDLAVVQIAGLVARRIVCFVKPGAQLGRGERFGLIRFGSRLDVYLPEGVSPQVEIGQTMIAGETVIAELGTGVHTDQNKGELHG.

Catalysis depends on S188, which acts as the Schiff-base intermediate with substrate; via pyruvic acid. S188 bears the Pyruvic acid (Ser); by autocatalysis mark.

It belongs to the phosphatidylserine decarboxylase family. PSD-A subfamily. Heterodimer of a large membrane-associated beta subunit and a small pyruvoyl-containing alpha subunit. Requires pyruvate as cofactor. Post-translationally, is synthesized initially as an inactive proenzyme. Formation of the active enzyme involves a self-maturation process in which the active site pyruvoyl group is generated from an internal serine residue via an autocatalytic post-translational modification. Two non-identical subunits are generated from the proenzyme in this reaction, and the pyruvate is formed at the N-terminus of the alpha chain, which is derived from the carboxyl end of the proenzyme. The post-translation cleavage follows an unusual pathway, termed non-hydrolytic serinolysis, in which the side chain hydroxyl group of the serine supplies its oxygen atom to form the C-terminus of the beta chain, while the remainder of the serine residue undergoes an oxidative deamination to produce ammonia and the pyruvoyl prosthetic group on the alpha chain.

It localises to the cell membrane. It carries out the reaction a 1,2-diacyl-sn-glycero-3-phospho-L-serine + H(+) = a 1,2-diacyl-sn-glycero-3-phosphoethanolamine + CO2. The protein operates within phospholipid metabolism; phosphatidylethanolamine biosynthesis; phosphatidylethanolamine from CDP-diacylglycerol: step 2/2. Catalyzes the formation of phosphatidylethanolamine (PtdEtn) from phosphatidylserine (PtdSer). In Ruegeria sp. (strain TM1040) (Silicibacter sp.), this protein is Phosphatidylserine decarboxylase proenzyme.